A 476-amino-acid polypeptide reads, in one-letter code: Bifunctional protein HldE (476 aa).

Residues 1–318 (MFQYSAEFKQ…ENAIHGRSNT (318 aa)) are ribokinase. 195–198 (NMSE) is a binding site for ATP. D264 is a catalytic residue. Positions 344–476 (MTNGCFDILH…VISKIQQLKD (133 aa)) are cytidylyltransferase.

The protein in the N-terminal section; belongs to the carbohydrate kinase PfkB family. In the C-terminal section; belongs to the cytidylyltransferase family. Homodimer.

The enzyme catalyses D-glycero-beta-D-manno-heptose 7-phosphate + ATP = D-glycero-beta-D-manno-heptose 1,7-bisphosphate + ADP + H(+). It catalyses the reaction D-glycero-beta-D-manno-heptose 1-phosphate + ATP + H(+) = ADP-D-glycero-beta-D-manno-heptose + diphosphate. It participates in nucleotide-sugar biosynthesis; ADP-L-glycero-beta-D-manno-heptose biosynthesis; ADP-L-glycero-beta-D-manno-heptose from D-glycero-beta-D-manno-heptose 7-phosphate: step 1/4. Its pathway is nucleotide-sugar biosynthesis; ADP-L-glycero-beta-D-manno-heptose biosynthesis; ADP-L-glycero-beta-D-manno-heptose from D-glycero-beta-D-manno-heptose 7-phosphate: step 3/4. It functions in the pathway bacterial outer membrane biogenesis; LPS core biosynthesis. Catalyzes the phosphorylation of D-glycero-D-manno-heptose 7-phosphate at the C-1 position to selectively form D-glycero-beta-D-manno-heptose-1,7-bisphosphate. Its function is as follows. Catalyzes the ADP transfer from ATP to D-glycero-beta-D-manno-heptose 1-phosphate, yielding ADP-D-glycero-beta-D-manno-heptose. The protein is Bifunctional protein HldE of Pasteurella multocida (strain Pm70).